Consider the following 420-residue polypeptide: Exodeoxyribonuclease 7 large subunit (420 aa).

It belongs to the XseA family. As to quaternary structure, heterooligomer composed of large and small subunits.

Its subcellular location is the cytoplasm. It catalyses the reaction Exonucleolytic cleavage in either 5'- to 3'- or 3'- to 5'-direction to yield nucleoside 5'-phosphates.. Its function is as follows. Bidirectionally degrades single-stranded DNA into large acid-insoluble oligonucleotides, which are then degraded further into small acid-soluble oligonucleotides. The protein is Exodeoxyribonuclease 7 large subunit of Helicobacter pylori (strain J99 / ATCC 700824) (Campylobacter pylori J99).